The primary structure comprises 305 residues: Oxygen-dependent coproporphyrinogen-III oxidase (305 aa).

Ser98 contributes to the substrate binding site. A divalent metal cation contacts are provided by His102 and His112. His112 functions as the Proton donor in the catalytic mechanism. Residue 114 to 116 (NVR) coordinates substrate. The a divalent metal cation site is built by His151 and His181. The interval 246-281 (YVEFNLVYDRGTLFGLQSGGRTESILMSMPPLARWE) is important for dimerization. 264–266 (GGR) contacts substrate.

This sequence belongs to the aerobic coproporphyrinogen-III oxidase family. Homodimer. It depends on a divalent metal cation as a cofactor.

It localises to the cytoplasm. It carries out the reaction coproporphyrinogen III + O2 + 2 H(+) = protoporphyrinogen IX + 2 CO2 + 2 H2O. The protein operates within porphyrin-containing compound metabolism; protoporphyrin-IX biosynthesis; protoporphyrinogen-IX from coproporphyrinogen-III (O2 route): step 1/1. Functionally, involved in the heme biosynthesis. Catalyzes the aerobic oxidative decarboxylation of propionate groups of rings A and B of coproporphyrinogen-III to yield the vinyl groups in protoporphyrinogen-IX. This Vibrio vulnificus (strain CMCP6) protein is Oxygen-dependent coproporphyrinogen-III oxidase.